The following is a 554-amino-acid chain: Dihydroxy-acid dehydratase (554 aa).

Asp-78 contacts Mg(2+). Cys-119 is a [2Fe-2S] cluster binding site. Mg(2+) is bound by residues Asp-120 and Lys-121. Lys-121 carries the N6-carboxylysine modification. Residue Cys-191 coordinates [2Fe-2S] cluster. Glu-442 is a binding site for Mg(2+). Ser-468 (proton acceptor) is an active-site residue.

The protein belongs to the IlvD/Edd family. In terms of assembly, homodimer. [2Fe-2S] cluster serves as cofactor. It depends on Mg(2+) as a cofactor.

It catalyses the reaction (2R)-2,3-dihydroxy-3-methylbutanoate = 3-methyl-2-oxobutanoate + H2O. The enzyme catalyses (2R,3R)-2,3-dihydroxy-3-methylpentanoate = (S)-3-methyl-2-oxopentanoate + H2O. The protein operates within amino-acid biosynthesis; L-isoleucine biosynthesis; L-isoleucine from 2-oxobutanoate: step 3/4. Its pathway is amino-acid biosynthesis; L-valine biosynthesis; L-valine from pyruvate: step 3/4. In terms of biological role, functions in the biosynthesis of branched-chain amino acids. Catalyzes the dehydration of (2R,3R)-2,3-dihydroxy-3-methylpentanoate (2,3-dihydroxy-3-methylvalerate) into 2-oxo-3-methylpentanoate (2-oxo-3-methylvalerate) and of (2R)-2,3-dihydroxy-3-methylbutanoate (2,3-dihydroxyisovalerate) into 2-oxo-3-methylbutanoate (2-oxoisovalerate), the penultimate precursor to L-isoleucine and L-valine, respectively. The sequence is that of Dihydroxy-acid dehydratase from Thermotoga petrophila (strain ATCC BAA-488 / DSM 13995 / JCM 10881 / RKU-1).